Here is a 61-residue protein sequence, read N- to C-terminus: Opistoporin-4 (61 aa).

Residues 45-61 (EAGQMPFDEFMDILHYY) constitute a propeptide that is removed on maturation.

This sequence belongs to the non-disulfide-bridged peptide (NDBP) superfamily. Long chain multifunctional peptide (group 2) family. As to expression, expressed by the venom gland.

The protein localises to the secreted. Its subcellular location is the target cell membrane. At high concentrations, acts as a pore former in cellular membranes and causes the leakage of the cells. At submicromolar concentrations, degranulates granulocytes and has a weak hemolytic activity against human erythrocytes. Also strongly inhibits the production of superoxide anions. Has a strong antibacterial activity against Gram-negative bacteria but is less active against Gram-positive bacteria. Also has antifungal activity. The polypeptide is Opistoporin-4 (Opistophthalmus carinatus (African yellow leg scorpion)).